A 176-amino-acid polypeptide reads, in one-letter code: MVTFSHVSSLSHWFLLLLLLNLFLPVIFAMPESYSFNCPDGEYQSNDVCCKTCPSGTFVKAPCKIPHTQGQCEKCHPGTFTGKDNGLHDCELCSTCDKDQNMVADCSATSDRKCECQIGLYYYDPKFPESCRPCTKCPQGIPVLQECNSTANTVCSSSVSNPRNWLFLLMLIVFCI.

An N-terminal signal peptide occupies residues 1-29; that stretch reads MVTFSHVSSLSHWFLLLLLLNLFLPVIFA. TNFR-Cys repeat units lie at residues 37-72, 74-114, and 115-155; these read NCPDGEYQSNDVCCKTCPSGTFVKAPCKIPHTQGQC, KCHP…DRKC, and ECQI…NTVC. Intrachain disulfides connect cysteine 38–cysteine 49, cysteine 50–cysteine 63, cysteine 53–cysteine 72, cysteine 75–cysteine 90, cysteine 93–cysteine 106, cysteine 96–cysteine 114, cysteine 116–cysteine 131, cysteine 134–cysteine 147, and cysteine 137–cysteine 155. N-linked (GlcNAc...) asparagine glycosylation occurs at asparagine 148. The GPI-anchor amidated cysteine moiety is linked to residue cysteine 155. The propeptide at 156-176 is removed in mature form; sequence SSSVSNPRNWLFLLMLIVFCI.

In terms of tissue distribution, ubiquitous.

Its subcellular location is the cell membrane. Its function is as follows. Receptor for the cytotoxic ligand TRAIL. Lacks a cytoplasmic death domain and hence is not capable of inducing apoptosis. May protect cells against TRAIL mediated apoptosis through ligand competition. Cannot induce the NF-kappa-B pathway. In Mus musculus (Mouse), this protein is Tumor necrosis factor receptor superfamily member 23 (Tnfrsf23).